The chain runs to 232 residues: Enolase-phosphatase E1 (232 aa).

The protein belongs to the HAD-like hydrolase superfamily. MasA/MtnC family. As to quaternary structure, monomer. Mg(2+) serves as cofactor.

It carries out the reaction 5-methylsulfanyl-2,3-dioxopentyl phosphate + H2O = 1,2-dihydroxy-5-(methylsulfanyl)pent-1-en-3-one + phosphate. The protein operates within amino-acid biosynthesis; L-methionine biosynthesis via salvage pathway; L-methionine from S-methyl-5-thio-alpha-D-ribose 1-phosphate: step 3/6. It functions in the pathway amino-acid biosynthesis; L-methionine biosynthesis via salvage pathway; L-methionine from S-methyl-5-thio-alpha-D-ribose 1-phosphate: step 4/6. Its function is as follows. Bifunctional enzyme that catalyzes the enolization of 2,3-diketo-5-methylthiopentyl-1-phosphate (DK-MTP-1-P) into the intermediate 2-hydroxy-3-keto-5-methylthiopentenyl-1-phosphate (HK-MTPenyl-1-P), which is then dephosphorylated to form the acireductone 1,2-dihydroxy-3-keto-5-methylthiopentene (DHK-MTPene). This Xanthomonas campestris pv. campestris (strain B100) protein is Enolase-phosphatase E1.